A 150-amino-acid polypeptide reads, in one-letter code: Protein-export protein SecB (150 aa).

Belongs to the SecB family. Homotetramer, a dimer of dimers. One homotetramer interacts with 1 SecA dimer.

The protein localises to the cytoplasm. One of the proteins required for the normal export of preproteins out of the cell cytoplasm. It is a molecular chaperone that binds to a subset of precursor proteins, maintaining them in a translocation-competent state. It also specifically binds to its receptor SecA. The sequence is that of Protein-export protein SecB from Psychrobacter cryohalolentis (strain ATCC BAA-1226 / DSM 17306 / VKM B-2378 / K5).